The sequence spans 23 residues: Protein DCL, chloroplastic (23 aa).

Its subcellular location is the plastid. The protein localises to the chloroplast. Its function is as follows. Has a function in the early stage of chloroplast development and palisade cell morphogenesis. The sequence is that of Protein DCL, chloroplastic from Pseudotsuga menziesii (Douglas-fir).